A 164-amino-acid chain; its full sequence is FMN reductase (NADH) RutF (164 aa).

This sequence belongs to the non-flavoprotein flavin reductase family. RutF subfamily.

It carries out the reaction FMNH2 + NAD(+) = FMN + NADH + 2 H(+). Functionally, catalyzes the reduction of FMN to FMNH2 which is used to reduce pyrimidine by RutA via the Rut pathway. The protein is FMN reductase (NADH) RutF of Enterobacter sp. (strain 638).